Consider the following 143-residue polypeptide: Large ribosomal subunit protein uL13 (143 aa).

This sequence belongs to the universal ribosomal protein uL13 family. Part of the 50S ribosomal subunit.

In terms of biological role, this protein is one of the early assembly proteins of the 50S ribosomal subunit, although it is not seen to bind rRNA by itself. It is important during the early stages of 50S assembly. This is Large ribosomal subunit protein uL13 from Thermoanaerobacter pseudethanolicus (strain ATCC 33223 / 39E) (Clostridium thermohydrosulfuricum).